A 94-amino-acid polypeptide reads, in one-letter code: Aspartyl/glutamyl-tRNA(Asn/Gln) amidotransferase subunit C (94 aa).

This sequence belongs to the GatC family. As to quaternary structure, heterotrimer of A, B and C subunits.

The enzyme catalyses L-glutamyl-tRNA(Gln) + L-glutamine + ATP + H2O = L-glutaminyl-tRNA(Gln) + L-glutamate + ADP + phosphate + H(+). It carries out the reaction L-aspartyl-tRNA(Asn) + L-glutamine + ATP + H2O = L-asparaginyl-tRNA(Asn) + L-glutamate + ADP + phosphate + 2 H(+). In terms of biological role, allows the formation of correctly charged Asn-tRNA(Asn) or Gln-tRNA(Gln) through the transamidation of misacylated Asp-tRNA(Asn) or Glu-tRNA(Gln) in organisms which lack either or both of asparaginyl-tRNA or glutaminyl-tRNA synthetases. The reaction takes place in the presence of glutamine and ATP through an activated phospho-Asp-tRNA(Asn) or phospho-Glu-tRNA(Gln). The polypeptide is Aspartyl/glutamyl-tRNA(Asn/Gln) amidotransferase subunit C (Campylobacter jejuni subsp. doylei (strain ATCC BAA-1458 / RM4099 / 269.97)).